We begin with the raw amino-acid sequence, 351 residues long: DNA polymerase IV (351 aa).

The 182-residue stretch at 4–185 (IIHVDMDCFF…LPLAKIPGVG (182 aa)) folds into the UmuC domain. 2 residues coordinate Mg(2+): D8 and D103. Residue E104 is part of the active site.

Belongs to the DNA polymerase type-Y family. As to quaternary structure, monomer. Mg(2+) serves as cofactor.

The protein localises to the cytoplasm. It catalyses the reaction DNA(n) + a 2'-deoxyribonucleoside 5'-triphosphate = DNA(n+1) + diphosphate. Functionally, poorly processive, error-prone DNA polymerase involved in untargeted mutagenesis. Copies undamaged DNA at stalled replication forks, which arise in vivo from mismatched or misaligned primer ends. These misaligned primers can be extended by PolIV. Exhibits no 3'-5' exonuclease (proofreading) activity. May be involved in translesional synthesis, in conjunction with the beta clamp from PolIII. In Escherichia coli O9:H4 (strain HS), this protein is DNA polymerase IV.